Here is a 127-residue protein sequence, read N- to C-terminus: Holo-[acyl-carrier-protein] synthase (127 aa).

Residues aspartate 8 and glutamate 59 each contribute to the Mg(2+) site.

Belongs to the P-Pant transferase superfamily. AcpS family. Requires Mg(2+) as cofactor.

It is found in the cytoplasm. It carries out the reaction apo-[ACP] + CoA = holo-[ACP] + adenosine 3',5'-bisphosphate + H(+). Functionally, transfers the 4'-phosphopantetheine moiety from coenzyme A to a Ser of acyl-carrier-protein. This Rickettsia bellii (strain OSU 85-389) protein is Holo-[acyl-carrier-protein] synthase.